The sequence spans 410 residues: Phospho-N-acetylmuramoyl-pentapeptide-transferase (410 aa).

Transmembrane regions (helical) follow at residues 27-47 (RMIL…PYFI), 77-97 (TPTM…VLWM), 99-119 (LTHI…LIGG), 140-160 (LFFQ…SSVN), 213-233 (PVVT…FFVI), 248-268 (GLLA…AFVS), 288-308 (IAIY…YNGY), 312-332 (VFMG…SAVL), 337-357 (FLLG…ILQV), and 389-409 (VIRF…SLKF).

It belongs to the glycosyltransferase 4 family. MraY subfamily. The cofactor is Mg(2+).

Its subcellular location is the cell inner membrane. It carries out the reaction UDP-N-acetyl-alpha-D-muramoyl-L-alanyl-gamma-D-glutamyl-meso-2,6-diaminopimeloyl-D-alanyl-D-alanine + di-trans,octa-cis-undecaprenyl phosphate = di-trans,octa-cis-undecaprenyl diphospho-N-acetyl-alpha-D-muramoyl-L-alanyl-D-glutamyl-meso-2,6-diaminopimeloyl-D-alanyl-D-alanine + UMP. It functions in the pathway cell wall biogenesis; peptidoglycan biosynthesis. Catalyzes the initial step of the lipid cycle reactions in the biosynthesis of the cell wall peptidoglycan: transfers peptidoglycan precursor phospho-MurNAc-pentapeptide from UDP-MurNAc-pentapeptide onto the lipid carrier undecaprenyl phosphate, yielding undecaprenyl-pyrophosphoryl-MurNAc-pentapeptide, known as lipid I. The protein is Phospho-N-acetylmuramoyl-pentapeptide-transferase of Protochlamydia amoebophila (strain UWE25).